The chain runs to 473 residues: Trigger factor (473 aa).

A PPIase FKBP-type domain is found at 174-261; that stretch reads GDIAVVSFKG…LKDLKEKELP (88 aa). A disordered region spans residues 442-473; it reads ATKLTTKTTTKATTKKGVKTKSKPKVNKKEKN. A compositionally biased stretch (low complexity) spans 444 to 453; sequence KLTTKTTTKA. Residues 454–467 show a composition bias toward basic residues; the sequence is TTKKGVKTKSKPKV.

The protein belongs to the FKBP-type PPIase family. Tig subfamily.

Its subcellular location is the cytoplasm. The catalysed reaction is [protein]-peptidylproline (omega=180) = [protein]-peptidylproline (omega=0). Involved in protein export. Acts as a chaperone by maintaining the newly synthesized protein in an open conformation. Functions as a peptidyl-prolyl cis-trans isomerase. In Prochlorococcus marinus subsp. pastoris (strain CCMP1986 / NIES-2087 / MED4), this protein is Trigger factor.